A 514-amino-acid chain; its full sequence is Protein phosphatase 1H (514 aa).

Position 7 is a phosphoserine (Ser-7). Residues 77–507 (ATGYAEVINA…DDISVYVIPL (431 aa)) form the PPM-type phosphatase domain. Residues 109 to 135 (AVTSTPNRNSSKRRSSLPNGEGLQLKE) form a disordered region. Position 113 is a phosphothreonine (Thr-113). Phosphoserine is present on residues Ser-124 and Ser-211. Position 213 is an omega-N-methylarginine (Arg-213). Ser-221 is subject to Phosphoserine. Residue Thr-224 is modified to Phosphothreonine. Residue Ser-422 is modified to Phosphoserine.

It belongs to the PP2C family.

It is found in the nucleus. Its subcellular location is the cytoplasm. It carries out the reaction O-phospho-L-seryl-[protein] + H2O = L-seryl-[protein] + phosphate. The catalysed reaction is O-phospho-L-threonyl-[protein] + H2O = L-threonyl-[protein] + phosphate. Its function is as follows. Dephosphorylates CDKN1B at 'Thr-187', thus removing a signal for proteasomal degradation. This is Protein phosphatase 1H (PPM1H) from Homo sapiens (Human).